The chain runs to 149 residues: Large ribosomal subunit protein bL9 (149 aa).

This sequence belongs to the bacterial ribosomal protein bL9 family.

Binds to the 23S rRNA. This is Large ribosomal subunit protein bL9 from Helicobacter acinonychis (strain Sheeba).